The sequence spans 779 residues: Kazrin (779 aa).

A coiled-coil region spans residues 79–261 (AQVLLREEVV…LATLTKDVPK (183 aa)). Residues 295-366 (QQTLYHSHPP…PGPVQKSLHN (72 aa)) form a disordered region. 3 positions are modified to phosphoserine: serine 356, serine 371, and serine 391. The interval 403 to 429 (KSLDPGLFDDSDSQCSPTRHSLSLSEG) is disordered. Positions 415–426 (SQCSPTRHSLSL) are enriched in polar residues. 3 SAM domains span residues 450–515 (WKAG…YRDA), 528–592 (DHHW…LYQV), and 616–683 (WTNQ…STIF). Positions 685-779 (PSNSTGIRES…GYGSLEVTNV (95 aa)) are disordered. Over residues 736-746 (SSKEPDFHDDY) the composition is skewed to basic and acidic residues.

Belongs to the kazrin family. In terms of tissue distribution, expressed in skin interfollicular epidermis and hair follicles. Expressed in tongue epithelium basal suprabasal layers.

It localises to the cell junction. Its subcellular location is the nucleus. It is found in the cytoplasm. The protein resides in the cytoskeleton. Its function is as follows. Component of the cornified envelope of keratinocytes. May be involved in the interplay between adherens junctions and desmosomes. The function in the nucleus is not known. In Mus musculus (Mouse), this protein is Kazrin (Kazn).